The sequence spans 299 residues: Superkiller complex protein 8 (299 aa).

WD repeat units lie at residues 11–48, 54–93, 96–135, 138–177, 180–219, 223–263, and 266–299; these read AHED…FLTE, KHIL…LHKT, SGPL…KLRS, NTNK…RVSE, AHGV…PYIA, GHSS…LDSS, and AHAD…ALKQ.

It belongs to the SKI8 family.

The protein is Superkiller complex protein 8 (skic8) of Dictyostelium discoideum (Social amoeba).